Here is a 305-residue protein sequence, read N- to C-terminus: RNA-binding protein with serine-rich domain 1 (305 aa).

Positions 1–10 (MDLSGVKKKS) are enriched in basic residues. The segment at 1–161 (MDLSGVKKKS…KRRSPSPKPT (161 aa)) is necessary for interaction with SRP54, nuclear localization and exon-skipping. The disordered stretch occupies residues 1-170 (MDLSGVKKKS…TKVHIGRLTR (170 aa)). The tract at residues 1 to 220 (MDLSGVKKKS…ENPDEAEKAL (220 aa)) is necessary for interaction with the cleaved p110 isoform of CDC2L1. Glycyl lysine isopeptide (Lys-Gly) (interchain with G-Cter in SUMO2) cross-links involve residues K7 and K15. Residues 33-59 (DRSDEKSKDRSKDKGTTKESSEKDRGR) are compositionally biased toward basic and acidic residues. S53 is modified (phosphoserine). Residues 68–126 (ASSGSSSTRSRSSSTSSSGSSTSTGSSSGSSSSSASSRSGSSSTSRSSSSSSSSGSPSP) show a composition bias toward low complexity. The segment at 69–121 (SSGSSSTRSRSSSTSSSGSSTSTGSSSGSSSSSASSRSGSSSTSRSSSSSSSS) is necessary for interactions with UPF2 and UPF3B and UPF2-dependent NMD. Composition is skewed to basic residues over residues 127–143 (SRRR…KSKP) and 151–167 (RKRR…HIGR). S155 and S157 each carry phosphoserine. The segment at 156–242 (PSPKPTKVHI…ITATAVLAPW (87 aa)) is necessary for interaction with PNN and exon-skipping. Positions 159–244 (KPTKVHIGRL…ATAVLAPWPR (86 aa)) are interaction with SAP18 and ACIN1. T161 carries the post-translational modification Phosphothreonine. The region spanning 161–240 (TKVHIGRLTR…QEITATAVLA (80 aa)) is the RRM domain. At K218 the chain carries N6-acetyllysine. A necessary for interaction with TRA2B, nuclear localization and exon-skipping region spans residues 238 to 305 (VLAPWPRPPP…RSRSSSNSSR (68 aa)). The interval 240 to 305 (APWPRPPPRR…RSRSSSNSSR (66 aa)) is disordered. The span at 242–262 (WPRPPPRRFSPPRRMLPPPPM) shows a compositional bias: pro residues. The segment covering 266 to 298 (SPPRMRRRSRSPRRRSPVRRRSRSPGRRRHRSR) has biased composition (basic residues).

The protein belongs to the splicing factor SR family. In terms of assembly, found in mRNA splicing-dependent exon junction complexes (EJC). Found in a post-splicing complex with NXF1, RBM8A, UPF1, UPF2, UPF3A, UPF3B and RNPS1. Component of the heterotrimeric ASAP (apoptosis- and splicing-associated protein) and PSAP complexes consisting of RNPS1, SAP18 and either ACIN1 or PNN, respectively; the ASAP and PSAP complexes probably are formed mutually exclusive. Component of the active spliceosome. Associates with polysomes. Interacts with the cleaved p110 isoform of CDC2L1, CSNK2A1, PNN, SART3, SRP54, SRRM1 and TRA2B/SFRS10. Phosphorylated on one or more of the four Ser/Thr residues (Ser-43, Thr-49, Ser-52 or Ser-53). Ser-53 phosphorylation site is important for splicing and translation stimulation activity in vitro.

It localises to the nucleus. It is found in the nucleus speckle. The protein resides in the cytoplasm. Its function is as follows. Part of pre- and post-splicing multiprotein mRNP complexes. Auxiliary component of the splicing-dependent multiprotein exon junction complex (EJC) deposited at splice junction on mRNAs. The EJC is a dynamic structure consisting of core proteins and several peripheral nuclear and cytoplasmic associated factors that join the complex only transiently either during EJC assembly or during subsequent mRNA metabolism. Component of the ASAP and PSAP complexes which bind RNA in a sequence-independent manner and are proposed to be recruited to the EJC prior to or during the splicing process and to regulate specific excision of introns in specific transcription subsets. The ASAP complex can inhibit RNA processing during in vitro splicing reactions. The ASAP complex promotes apoptosis and is disassembled after induction of apoptosis. Enhances the formation of the ATP-dependent A complex of the spliceosome. Involved in both constitutive splicing and, in association with SRP54 and TRA2B/SFRS10, in distinctive modulation of alternative splicing in a substrate-dependent manner. Involved in the splicing modulation of BCL2L1/Bcl-X (and probably other apoptotic genes); specifically inhibits formation of proapoptotic isoforms such as Bcl-X(S); the activity is different from the established EJC assembly and function. Participates in mRNA 3'-end cleavage. Involved in UPF2-dependent nonsense-mediated decay (NMD) of mRNAs containing premature stop codons. Also mediates increase of mRNA abundance and translational efficiency. Binds spliced mRNA 20-25 nt upstream of exon-exon junctions. This chain is RNA-binding protein with serine-rich domain 1 (Rnps1), found in Rattus norvegicus (Rat).